We begin with the raw amino-acid sequence, 274 residues long: Peroxiredoxin-4 (274 aa).

The N-terminal stretch at 1–40 (MEARSKLLDGTTASRRWTRKLVLLLPPLLLFLLRTESLQG) is a signal peptide. The region spanning 82-240 (AKISKPAPYW…TLRLVQAFQY (159 aa)) is the Thioredoxin domain. The active-site Cysteine sulfenic acid (-SOH) intermediate is the cysteine 127.

It belongs to the peroxiredoxin family. AhpC/Prx1 subfamily. Homodimer; disulfide-linked, upon oxidation. 5 homodimers assemble to form a ring-like decamer. The enzyme can be inactivated by further oxidation of the cysteine sulfenic acid (C(P)-SOH) to sulphinic acid (C(P)-SO2H) and sulphonic acid (C(P)-SO3H) instead of its condensation to a disulfide bond.

Its subcellular location is the cytoplasm. The protein localises to the endoplasmic reticulum. It catalyses the reaction a hydroperoxide + [thioredoxin]-dithiol = an alcohol + [thioredoxin]-disulfide + H2O. Its function is as follows. Thiol-specific peroxidase that catalyzes the reduction of hydrogen peroxide and organic hydroperoxides to water and alcohols, respectively. Plays a role in cell protection against oxidative stress by detoxifying peroxides and as sensor of hydrogen peroxide-mediated signaling events. Regulates the activation of NF-kappa-B in the cytosol by a modulation of I-kappa-B-alpha phosphorylation. This chain is Peroxiredoxin-4 (Prdx4), found in Mus musculus (Mouse).